We begin with the raw amino-acid sequence, 201 residues long: Holliday junction resolvase RecU (201 aa).

Mg(2+)-binding residues include threonine 87, aspartate 89, glutamate 102, and glutamine 121.

Belongs to the RecU family. It depends on Mg(2+) as a cofactor.

Its subcellular location is the cytoplasm. It carries out the reaction Endonucleolytic cleavage at a junction such as a reciprocal single-stranded crossover between two homologous DNA duplexes (Holliday junction).. Functionally, endonuclease that resolves Holliday junction intermediates in genetic recombination. Cleaves mobile four-strand junctions by introducing symmetrical nicks in paired strands. Promotes annealing of linear ssDNA with homologous dsDNA. Required for DNA repair, homologous recombination and chromosome segregation. This chain is Holliday junction resolvase RecU, found in Listeria monocytogenes serotype 4b (strain F2365).